The sequence spans 84 residues: Putative membrane protein insertion efficiency factor (84 aa).

The protein belongs to the UPF0161 family.

The protein resides in the cell membrane. Functionally, could be involved in insertion of integral membrane proteins into the membrane. This chain is Putative membrane protein insertion efficiency factor, found in Staphylococcus carnosus (strain TM300).